Reading from the N-terminus, the 185-residue chain is Peptidyl-tRNA hydrolase (185 aa).

Tyr-14 is a binding site for tRNA. The active-site Proton acceptor is His-19. TRNA-binding residues include Tyr-65, Asn-67, and Asn-113.

It belongs to the PTH family. Monomer.

The protein resides in the cytoplasm. The catalysed reaction is an N-acyl-L-alpha-aminoacyl-tRNA + H2O = an N-acyl-L-amino acid + a tRNA + H(+). Functionally, hydrolyzes ribosome-free peptidyl-tRNAs (with 1 or more amino acids incorporated), which drop off the ribosome during protein synthesis, or as a result of ribosome stalling. Its function is as follows. Catalyzes the release of premature peptidyl moieties from peptidyl-tRNA molecules trapped in stalled 50S ribosomal subunits, and thus maintains levels of free tRNAs and 50S ribosomes. The chain is Peptidyl-tRNA hydrolase from Rickettsia felis (strain ATCC VR-1525 / URRWXCal2) (Rickettsia azadi).